The following is a 554-amino-acid chain: Formate--tetrahydrofolate ligase (554 aa).

Thr67–Thr74 provides a ligand contact to ATP.

The protein belongs to the formate--tetrahydrofolate ligase family.

The enzyme catalyses (6S)-5,6,7,8-tetrahydrofolate + formate + ATP = (6R)-10-formyltetrahydrofolate + ADP + phosphate. The protein operates within one-carbon metabolism; tetrahydrofolate interconversion. This Finegoldia magna (strain ATCC 29328 / DSM 20472 / WAL 2508) (Peptostreptococcus magnus) protein is Formate--tetrahydrofolate ligase.